Here is a 559-residue protein sequence, read N- to C-terminus: Prolyl 4-hydroxylase subunit alpha-1 (559 aa).

An N-terminal signal peptide occupies residues methionine 1 to alanine 16. The N-linked (GlcNAc...) asparagine glycan is linked to asparagine 158. Residues threonine 404 to glutamate 512 enclose the Fe2OG dioxygenase domain. 3 residues coordinate Fe cation: histidine 422, aspartate 424, and histidine 493. Lysine 503 provides a ligand contact to 2-oxoglutarate.

The protein belongs to the P4HA family. As to quaternary structure, heterotetramer of two alpha chains and two beta chains. Exists either as a phy-1(2)/pdi-2(2) tetramer or as a phy-1/phy-2/pdi-2(2) tetramer. Fe(2+) is required as a cofactor. It depends on L-ascorbate as a cofactor.

It localises to the endoplasmic reticulum lumen. It carries out the reaction L-prolyl-[collagen] + 2-oxoglutarate + O2 = trans-4-hydroxy-L-prolyl-[collagen] + succinate + CO2. In terms of biological role, catalyzes the post-translational formation of 4-hydroxyproline in -Xaa-Pro-Gly- sequences in collagens and other proteins. The protein is Prolyl 4-hydroxylase subunit alpha-1 (dpy-18) of Caenorhabditis elegans.